Consider the following 364-residue polypeptide: Histidinol-phosphate aminotransferase BQ2027_MB2256C (364 aa).

Lysine 220 is subject to N6-(pyridoxal phosphate)lysine.

The protein belongs to the class-I pyridoxal-phosphate-dependent aminotransferase family. As to quaternary structure, monomer. It depends on pyridoxal 5'-phosphate as a cofactor.

The protein localises to the secreted. Its subcellular location is the cell wall. The catalysed reaction is L-histidinol phosphate + 2-oxoglutarate = 3-(imidazol-4-yl)-2-oxopropyl phosphate + L-glutamate. Functionally, aminotransferase that catalyzes the conversion of histidinol phosphate and 2-oxoglutarate into L-glutamate and imidazole acetol phosphate. Might play a significant role in mediating histidine biosynthesis during infection. Facilitates mycobacterial survival and virulence in macrophages. This is Histidinol-phosphate aminotransferase BQ2027_MB2256C from Mycobacterium bovis (strain ATCC BAA-935 / AF2122/97).